Reading from the N-terminus, the 115-residue chain is Glutaredoxin-like protein C5orf63 homolog (115 aa).

Cysteine 40 and cysteine 43 are oxidised to a cystine.

Belongs to the glutaredoxin family. YDR286C subfamily.

This chain is Glutaredoxin-like protein C5orf63 homolog, found in Mus musculus (Mouse).